Consider the following 260-residue polypeptide: Ribosome maturation factor RimP (260 aa).

The tract at residues 198-260 (QSLGILPPPP…RGDIDPIEGE (63 aa)) is disordered. Basic and acidic residues-rich tracts occupy residues 210–228 (AKTDPAKRGTPKPKLENGK) and 238–254 (NTKEHRLAAERLRRGDI).

This sequence belongs to the RimP family.

It is found in the cytoplasm. Its function is as follows. Required for maturation of 30S ribosomal subunits. The sequence is that of Ribosome maturation factor RimP from Nitrobacter winogradskyi (strain ATCC 25391 / DSM 10237 / CIP 104748 / NCIMB 11846 / Nb-255).